Consider the following 250-residue polypeptide: Probable transcriptional regulatory protein MAP_1030 (250 aa).

It belongs to the TACO1 family.

The protein resides in the cytoplasm. The chain is Probable transcriptional regulatory protein MAP_1030 from Mycolicibacterium paratuberculosis (strain ATCC BAA-968 / K-10) (Mycobacterium paratuberculosis).